The chain runs to 84 residues: SSGGLLLLLGLLTLCAELIPVSSRQRHRDCDKPPDKGNCGSVRRAFYYDTRLKTCKAFPYRGCNGNGNHFKTETLCRCECLVYP.

A signal peptide spans 1–23 (SSGGLLLLLGLLTLCAELIPVSS). A BPTI/Kunitz inhibitor domain is found at 30–80 (CDKPPDKGNCGSVRRAFYYDTRLKTCKAFPYRGCNGNGNHFKTETLCRCEC). 3 cysteine pairs are disulfide-bonded: cysteine 30/cysteine 80, cysteine 39/cysteine 63, and cysteine 55/cysteine 76.

It belongs to the venom Kunitz-type family. Heterodimer; disulfide-linked. The A chain has phospholipase A2 activity and the B chain shows homology with the basic protease inhibitors. In terms of tissue distribution, expressed by the venom gland.

It is found in the secreted. Its function is as follows. Beta-2 bungarotoxin is a presynaptic neurotoxin of the venom. The B chain is homologous to venom basic protease inhibitors but has no protease inhibitor activity and is non-toxic. The polypeptide is Kunitz-type serine protease inhibitor homolog beta-bungarotoxin B4 chain (Bungarus candidus (Malayan krait)).